Here is a 155-residue protein sequence, read N- to C-terminus: SsrA-binding protein (155 aa).

It belongs to the SmpB family.

Its subcellular location is the cytoplasm. Its function is as follows. Required for rescue of stalled ribosomes mediated by trans-translation. Binds to transfer-messenger RNA (tmRNA), required for stable association of tmRNA with ribosomes. tmRNA and SmpB together mimic tRNA shape, replacing the anticodon stem-loop with SmpB. tmRNA is encoded by the ssrA gene; the 2 termini fold to resemble tRNA(Ala) and it encodes a 'tag peptide', a short internal open reading frame. During trans-translation Ala-aminoacylated tmRNA acts like a tRNA, entering the A-site of stalled ribosomes, displacing the stalled mRNA. The ribosome then switches to translate the ORF on the tmRNA; the nascent peptide is terminated with the 'tag peptide' encoded by the tmRNA and targeted for degradation. The ribosome is freed to recommence translation, which seems to be the essential function of trans-translation. The sequence is that of SsrA-binding protein from Streptococcus pneumoniae (strain P1031).